The sequence spans 263 residues: 5'-nucleotidase SurE (263 aa).

Positions 8, 9, 40, and 93 each coordinate a divalent metal cation.

This sequence belongs to the SurE nucleotidase family. The cofactor is a divalent metal cation.

It localises to the cytoplasm. The enzyme catalyses a ribonucleoside 5'-phosphate + H2O = a ribonucleoside + phosphate. Its function is as follows. Nucleotidase that shows phosphatase activity on nucleoside 5'-monophosphates. The sequence is that of 5'-nucleotidase SurE from Beijerinckia indica subsp. indica (strain ATCC 9039 / DSM 1715 / NCIMB 8712).